The following is a 372-amino-acid chain: N-methyl-L-tryptophan oxidase (372 aa).

Residue 4–34 (DLIIIGSGSVGAAAGYYATRAGLNVLMTDAH) participates in FAD binding. Residue C308 is modified to S-8alpha-FAD cysteine.

This sequence belongs to the MSOX/MTOX family. MTOX subfamily. In terms of assembly, monomer. FAD serves as cofactor.

It carries out the reaction N(alpha)-methyl-L-tryptophan + O2 + H2O = L-tryptophan + formaldehyde + H2O2. Catalyzes the oxidative demethylation of N-methyl-L-tryptophan. This Shigella sonnei (strain Ss046) protein is N-methyl-L-tryptophan oxidase.